The sequence spans 141 residues: ATP synthase epsilon chain (141 aa).

The protein belongs to the ATPase epsilon chain family. F-type ATPases have 2 components, CF(1) - the catalytic core - and CF(0) - the membrane proton channel. CF(1) has five subunits: alpha(3), beta(3), gamma(1), delta(1), epsilon(1). CF(0) has three main subunits: a, b and c.

It localises to the cell inner membrane. Functionally, produces ATP from ADP in the presence of a proton gradient across the membrane. The protein is ATP synthase epsilon chain of Pseudomonas fluorescens (strain ATCC BAA-477 / NRRL B-23932 / Pf-5).